The primary structure comprises 179 residues: MVAINSNGFVTTTVEELLRWGRRNSLWPVTIGLACCAIEMMHTAASRFDLDRLGVIFRASPRQADVLIVAGTVVNKVAPMLKLIWDQMPDPKWCISMGGCASAGGPFPTYSTLQGVDRIIPVDVYIPGCPPTPQGLIYGILQLQRKIKEQGITKYDKLFADFNREIEKEGIFVPRELKV.

Positions 35, 36, 100, and 129 each coordinate [4Fe-4S] cluster.

Belongs to the complex I 20 kDa subunit family. As to quaternary structure, NDH-1 is composed of 14 different subunits. Subunits NuoB, C, D, E, F, and G constitute the peripheral sector of the complex. [4Fe-4S] cluster serves as cofactor.

It localises to the cell inner membrane. It catalyses the reaction a quinone + NADH + 5 H(+)(in) = a quinol + NAD(+) + 4 H(+)(out). In terms of biological role, NDH-1 shuttles electrons from NADH, via FMN and iron-sulfur (Fe-S) centers, to quinones in the respiratory chain. Couples the redox reaction to proton translocation (for every two electrons transferred, four hydrogen ions are translocated across the cytoplasmic membrane), and thus conserves the redox energy in a proton gradient. This chain is NADH-quinone oxidoreductase subunit B, found in Aquifex aeolicus (strain VF5).